The sequence spans 333 residues: Anthranilate phosphoribosyltransferase (333 aa).

Residues G81, 84–85, T89, 91–94, 109–117, and A121 contribute to the 5-phospho-alpha-D-ribose 1-diphosphate site; these read GN, NIST, and KHGNRSVSS. G81 lines the anthranilate pocket. Residue S93 participates in Mg(2+) binding. N112 contributes to the anthranilate binding site. R167 serves as a coordination point for anthranilate. Mg(2+) is bound by residues D225 and E226.

Belongs to the anthranilate phosphoribosyltransferase family. In terms of assembly, homodimer. The cofactor is Mg(2+).

It catalyses the reaction N-(5-phospho-beta-D-ribosyl)anthranilate + diphosphate = 5-phospho-alpha-D-ribose 1-diphosphate + anthranilate. The protein operates within amino-acid biosynthesis; L-tryptophan biosynthesis; L-tryptophan from chorismate: step 2/5. In terms of biological role, catalyzes the transfer of the phosphoribosyl group of 5-phosphorylribose-1-pyrophosphate (PRPP) to anthranilate to yield N-(5'-phosphoribosyl)-anthranilate (PRA). The sequence is that of Anthranilate phosphoribosyltransferase from Haemophilus influenzae (strain ATCC 51907 / DSM 11121 / KW20 / Rd).